We begin with the raw amino-acid sequence, 389 residues long: Chalcone synthase (389 aa).

Cys164 is a catalytic residue.

Belongs to the thiolase-like superfamily. Chalcone/stilbene synthases family.

The enzyme catalyses (E)-4-coumaroyl-CoA + 3 malonyl-CoA + 3 H(+) = 2',4,4',6'-tetrahydroxychalcone + 3 CO2 + 4 CoA. It functions in the pathway secondary metabolite biosynthesis; flavonoid biosynthesis. The primary product of this enzyme is 4,2',4',6'-tetrahydroxychalcone (also termed naringenin-chalcone or chalcone) which can under specific conditions spontaneously isomerize into naringenin. This chain is Chalcone synthase (CHS), found in Catharanthus roseus (Madagascar periwinkle).